Consider the following 474-residue polypeptide: Vacuolar basic amino acid transporter 2 (474 aa).

Residues 1 to 33 (MSISNWITTAYLITSTSFQPLYGSFSDALGRRN) lie on the Cytoplasmic side of the membrane. The helical transmembrane segment at 34–54 (CLFFANGAFTIGCLACGFSKN) threads the bilayer. Topologically, residues 55–62 (IYMLSFMR) are vacuolar. The chain crosses the membrane as a helical span at residues 63-85 (ALTGIGGGGLITLSTIVNSDVIP). Residues 86–97 (SSKRGIFQAFQN) lie on the Cytoplasmic side of the membrane. The chain crosses the membrane as a helical span at residues 98–118 (LLLGFGAICGASFGGTIASSI). Residues 119 to 121 (GWR) are Vacuolar-facing. The chain crosses the membrane as a helical span at residues 122-142 (WCFLIQVPISVISSILMNYYV). The Cytoplasmic segment spans residues 143–167 (PNQKEYNRQNSSIFQNPGKILRDID). Residues 168–188 (VMGSILIITGLTLQLLYLSLG) form a helical membrane-spanning segment. Residues 189–196 (CSTSKLSW) are Vacuolar-facing. The helical transmembrane segment at 197–217 (TSPSVLLLLVGSVIILLLFIL) threads the bilayer. Topologically, residues 218-238 (HERKTSARAIIPMELVNSSYS) are cytoplasmic. Residues 239-259 (VVVLSISILVGFASYAYLFTL) form a helical membrane-spanning segment. Residues 260-273 (PLFFQIVLGDSTAK) are Vacuolar-facing. The chain crosses the membrane as a helical span at residues 274–294 (AGLRLTIPSLFTPVGSLITGF). The Cytoplasmic segment spans residues 295–303 (SMSKYNCLR). Residues 304–324 (LLLYIGISLMFLGNFLFLFIE) form a helical membrane-spanning segment. Residues 325 to 331 (KTSPNWL) are Vacuolar-facing. The chain crosses the membrane as a helical span at residues 332–352 (IGLFLIPANLGQGITFPTTLF). Residues 353–375 (TFIFMFSKSDQATATSTLYLFRS) are Cytoplasmic-facing. The helical transmembrane segment at 376–396 (IGSVWGVAISAGVIQLSFAGL) threads the bilayer. The Vacuolar segment spans residues 397–447 (LRSNLKGLLDENKIKKLIVQLSANSSYIGSLHGEVKNTVIKSFDEATKRAH). A glycan (N-linked (GlcNAc...) asparagine) is linked at Asn-420. Residues 448 to 468 (LMSTLLSSLALILCILKDNLA) traverse the membrane as a helical segment. At 469–474 (KPKTRR) the chain is on the cytoplasmic side.

It belongs to the major facilitator superfamily.

The protein resides in the vacuole membrane. Its function is as follows. Transporter required for vacuolar uptake of histidine, arginine and lysine and to a lesser extent tyrosine. In Saccharomyces cerevisiae (strain ATCC 204508 / S288c) (Baker's yeast), this protein is Vacuolar basic amino acid transporter 2 (VBA2).